The primary structure comprises 1832 residues: MEDTPPSLSCSDCQRHFPSLPELSRHRELLHPSPNQDSEEADSIPRPYRCQQCGRGYRHPGSLVNHRRTHETGLFPCTTCGKDFSNPMALKSHMRTHAPEGRRRHRPPRPKEATPHLQGETVSTDSWGQRLGSSEGWENQTKHTEETPDCESVPDPRAASGTWEDLPTRQREGLASHPGPEDGADGWGPSTNSARAPPLPIPASSLLSNLEQYLAESVVNFTGGQEPTQSPPAEEERRYKCSQCGKTYKHAGSLTNHRQSHTLGIYPCAICFKEFSNLMALKNHSRLHAQYRPYHCPHCPRVFRLPRELLEHQQSHEGERQEPRWEEKGMPTTNGHTDESSQDQLPSAQMLNGSAELSTSGELEDSGLEEYRPFRCGDCGRTYRHAGSLINHRKSHQTGVYPCSLCSKQLFNAAALKNHVRAHHRPRQGVGENGQPSVPPAPLLLAETTHKEEEDPTTTLDHRPYKCSECGRAYRHRGSLVNHRHSHRTGEYQCSLCPRKYPNLMALRNHVRVHCKAARRSADIGAEGAPSHLKVELPPDPVEAEAAPHTDQDHVCKHEEEATDITPAADKTAAHICSICGLLFEDAESLERHGLTHGAGEKENSRTETTMSPPRAFACRDCGKSYRHSGSLINHRQTHQTGDFSCGACAKHFHTMAAMKNHLRRHSRRRSRRHRKRAGGASGGREAKLLAAESWTRELEDNEGLESPQDPSGESPHGAEGNLESDGDCLQAESEGDKCGLERDETHFQGDKESGGTGEGLERKDASLLDNLDIPGEEGGGTHFCDSLTGVDEDQKPATGQPNSSSHSANAVTGWQAGAAHTCSDCGHSFPHATGLLSHRPCHPPGIYQCSLCPKEFDSLPALRSHFQNHRPGEATSAQPFLCCLCGMIFPGRAGYRLHRRQAHSSSGMTEGSEEEGEEEGVAEAAPARSPPLQLSEAELLNQLQREVEALDSAGYGHICGCCGQTYDDLGSLERHHQSQSSGTTADKAPSPLGVAGDAMEMVVDSVLEDIVNSVSGEGGDAKSQEGAGTPLGDSLCIQGGESLLEAQPRPFRCNQCGKTYRHGGSLVNHRKIHQTGDFLCPVCSRCYPNLAAYRNHLRNHPRCKGSEPQVGPIPEAAGSSELQVGPIPEGGSNKPQHMAEEGPGQAEVEKLQEELKVEPLEEVARVKEEVWEETTVKGEEIEPRLETAEKGCQTEASSERPFSCEVCGRSYKHAGSLINHRQSHQTGHFGCQACSKGFSNLMSLKNHRRIHADPRRFRCSECGKAFRLRKQLASHQRVHMERRGGGGTRKATREDRPFRCGQCGRTYRHAGSLLNHRRSHETGQYSCPTCPKTYSNRMALKDHQRLHSENRRRRAGRSRRTAVRCALCGRSFPGRGSLERHLREHEETEREPANGQGGLDGTAASEANLTGSQGLETQLGGAEPVPHLEDGVPRPGERSQSPIRAASSEAPEPLSWGAGKAGGWPVGGGLGNHSGGWVPQFLTRSEEPEDSVHRSPCHAGDCQLNGPTLSHMDSWDNRDNSSQLQPGSHSSCSQCGKTYCQSGSLLNHNTNKTDRHYCLLCSKEFLNPVATKSHSHNHIDAQTFACPDCGKAFESHQELASHLQAHARGHSQVPAQMEEARDPKAGTGEDQVVLPGQGKAQEAPSETPRGPGESVERARGGQAVTSMAAEDKERPFRCTQCGRSYRHAGSLLNHQKAHTTGLYPCSLCPKLLPNLLSLKNHSRTHTDPKRHCCSICGKAFRTAARLEGHGRVHAPREGPFTCPHCPRHFRRRISFVQHQQQHQEEWTVAGSGAPVAPVTGRGDLPLPPPPTPTTPLLDPSPQWPADLSFSL.

8 consecutive C2H2-type zinc fingers follow at residues 8 to 31, 48 to 70, 75 to 97, 239 to 261, 266 to 288, 294 to 316, 374 to 396, and 401 to 424; these read LSCS…ELLH, YRCQ…RRTH, FPCT…MRTH, YKCS…RQSH, YPCA…SRLH, YHCP…QQSH, FRCG…RKSH, and YPCS…RAHH. The interval 26–47 is disordered; sequence HRELLHPSPNQDSEEADSIPRP. Basic residues predominate over residues 94-108; sequence MRTHAPEGRRRHRPP. A disordered region spans residues 94–200; the sequence is MRTHAPEGRR…TNSARAPPLP (107 aa). Basic and acidic residues predominate over residues 313-329; that stretch reads QQSHEGERQEPRWEEKG. The interval 313–346 is disordered; sequence QQSHEGERQEPRWEEKGMPTTNGHTDESSQDQLP. A Glycyl lysine isopeptide (Lys-Gly) (interchain with G-Cter in SUMO2) cross-link involves residue Lys-451. 2 C2H2-type zinc fingers span residues 465–487 and 492–514; these read YKCS…RHSH and YQCS…VRVH. Glycyl lysine isopeptide (Lys-Gly) (interchain with G-Cter in SUMO2) cross-links involve residues Lys-534 and Lys-557. Residues 575 to 597 form a C2H2-type 11 zinc finger; it reads HICSICGLLFEDAESLERHGLTH. At Ser-612 the chain carries Phosphoserine. 2 C2H2-type zinc fingers span residues 617-639 and 644-666; these read FACR…RQTH and FSCG…LRRH. A disordered region spans residues 660–810; it reads KNHLRRHSRR…QPNSSSHSAN (151 aa). Basic residues predominate over residues 661 to 678; the sequence is NHLRRHSRRRSRRHRKRA. Residue Lys-688 forms a Glycyl lysine isopeptide (Lys-Gly) (interchain with G-Cter in SUMO2) linkage. Residues 735–767 are compositionally biased toward basic and acidic residues; the sequence is EGDKCGLERDETHFQGDKESGGTGEGLERKDAS. Residues 798–810 show a composition bias toward polar residues; that stretch reads ATGQPNSSSHSAN. 3 consecutive C2H2-type zinc fingers follow at residues 821 to 843, 848 to 870, and 881 to 904; these read HTCS…RPCH, YQCS…FQNH, and FLCC…RQAH. The disordered stretch occupies residues 901-931; the sequence is RQAHSSSGMTEGSEEEGEEEGVAEAAPARSP. Residues 912–922 are compositionally biased toward acidic residues; that stretch reads GSEEEGEEEGV. The C2H2-type 17; degenerate zinc finger occupies 958–980; it reads HICGCCGQTYDDLGSLERHHQSQ. C2H2-type zinc fingers lie at residues 1052–1074 and 1079–1101; these read FRCN…RKIH and FLCP…LRNH. The tract at residues 1103–1148 is disordered; that stretch reads RCKGSEPQVGPIPEAAGSSELQVGPIPEGGSNKPQHMAEEGPGQAE. Residues Lys-1157, Lys-1168, and Lys-1178 each participate in a glycyl lysine isopeptide (Lys-Gly) (interchain with G-Cter in SUMO2) cross-link. C2H2-type zinc fingers lie at residues 1203–1225, 1230–1252, 1258–1280, 1299–1321, 1326–1348, and 1364–1386; these read FSCE…RQSH, FGCQ…RRIH, FRCS…QRVH, FRCG…RRSH, YSCP…QRLH, and VRCA…LREH. The tract at residues 1274 to 1294 is disordered; sequence ASHQRVHMERRGGGGTRKATR. Disordered regions lie at residues 1377 to 1481 and 1509 to 1529; these read GSLE…WVPQ and TLSH…QPGS. A compositionally biased stretch (basic and acidic residues) spans 1378 to 1393; sequence SLERHLREHEETEREP. Over residues 1406–1417 the composition is skewed to polar residues; it reads SEANLTGSQGLE. Over residues 1427–1438 the composition is skewed to basic and acidic residues; the sequence is PHLEDGVPRPGE. Positions 1460–1475 are enriched in gly residues; sequence GKAGGWPVGGGLGNHS. 6 consecutive C2H2-type zinc fingers follow at residues 1557–1579, 1585–1607, 1677–1699, 1704–1726, 1732–1754, and 1761–1783; these read HYCL…SHNH, FACP…LQAH, FRCT…QKAH, YPCS…SRTH, HCCS…GRVH, and FTCP…QQQH. A disordered region spans residues 1606–1672; sequence AHARGHSQVP…QAVTSMAAED (67 aa). Residues 1781 to 1832 form a disordered region; sequence QQHQEEWTVAGSGAPVAPVTGRGDLPLPPPPTPTTPLLDPSPQWPADLSFSL.

The protein belongs to the krueppel C2H2-type zinc-finger protein family.

The protein resides in the nucleus. Functionally, may be involved in transcriptional regulation. In Homo sapiens (Human), this protein is Zinc finger protein 646.